We begin with the raw amino-acid sequence, 99 residues long: Nucleoid-associated protein SAG1747 (99 aa).

Residues 1–10 show a composition bias toward low complexity; that stretch reads MMNMQNMMRQ. Positions 1–20 are disordered; sequence MMNMQNMMRQAQKLQKQMEQ.

This sequence belongs to the YbaB/EbfC family. In terms of assembly, homodimer.

The protein localises to the cytoplasm. It is found in the nucleoid. Its function is as follows. Binds to DNA and alters its conformation. May be involved in regulation of gene expression, nucleoid organization and DNA protection. This chain is Nucleoid-associated protein SAG1747, found in Streptococcus agalactiae serotype V (strain ATCC BAA-611 / 2603 V/R).